A 118-amino-acid chain; its full sequence is Large ribosomal subunit protein bL20 (118 aa).

It belongs to the bacterial ribosomal protein bL20 family.

Functionally, binds directly to 23S ribosomal RNA and is necessary for the in vitro assembly process of the 50S ribosomal subunit. It is not involved in the protein synthesizing functions of that subunit. In Buchnera aphidicola subsp. Acyrthosiphon pisum (strain APS) (Acyrthosiphon pisum symbiotic bacterium), this protein is Large ribosomal subunit protein bL20 (rplT).